The sequence spans 317 residues: NADH-ubiquinone oxidoreductase chain 1 (317 aa).

Transmembrane regions (helical) follow at residues 3 to 23 (YIEL…LTVA), 37 to 57 (PNAV…KLLL), 69 to 89 (LILF…WSVI), 103 to 123 (GFIL…LAGW), 141 to 161 (LISY…IGGT), 173 to 193 (AIWY…GCVA), 207 to 227 (SELV…LFFL), 247 to 267 (GGTG…YIWV), and 282 to 302 (LCWM…PAYL).

It belongs to the complex I subunit 1 family.

It is found in the mitochondrion inner membrane. The catalysed reaction is a ubiquinone + NADH + 5 H(+)(in) = a ubiquinol + NAD(+) + 4 H(+)(out). Its function is as follows. Core subunit of the mitochondrial membrane respiratory chain NADH dehydrogenase (Complex I) that is believed to belong to the minimal assembly required for catalysis. Complex I functions in the transfer of electrons from NADH to the respiratory chain. The immediate electron acceptor for the enzyme is believed to be ubiquinone. The chain is NADH-ubiquinone oxidoreductase chain 1 (NAD1) from Candida albicans (strain SC5314 / ATCC MYA-2876) (Yeast).